We begin with the raw amino-acid sequence, 339 residues long: Protein RecA (339 aa).

ATP is bound at residue glycine 73–threonine 80.

The protein belongs to the RecA family.

It is found in the cytoplasm. Functionally, can catalyze the hydrolysis of ATP in the presence of single-stranded DNA, the ATP-dependent uptake of single-stranded DNA by duplex DNA, and the ATP-dependent hybridization of homologous single-stranded DNAs. It interacts with LexA causing its activation and leading to its autocatalytic cleavage. The polypeptide is Protein RecA (Mycoplasmopsis pulmonis (strain UAB CTIP) (Mycoplasma pulmonis)).